The chain runs to 296 residues: uncharacterized protein (296 aa).

Residues 1–57 (MTSFLSFSAISAHPPTFSGASFRPRSFSPRLFKSCVKCTYAEAGLSSASWSAPIDIV) constitute a chloroplast transit peptide.

It belongs to the NAD(P)-dependent epimerase/dehydratase family.

It is found in the plastid. The protein localises to the chloroplast. It localises to the plastoglobule. This is an uncharacterized protein from Arabidopsis thaliana (Mouse-ear cress).